The sequence spans 247 residues: Large ribosomal subunit protein uL3 (247 aa).

Disordered regions lie at residues 140–164 (SHRS…KMPG) and 212–247 (LPKE…KEGA). The residue at position 151 (glutamine 151) is an N5-methylglutamine. Basic and acidic residues predominate over residues 232–247 (DEDKAPADTPAEKEGA).

Belongs to the universal ribosomal protein uL3 family. As to quaternary structure, part of the 50S ribosomal subunit. Forms a cluster with proteins L14 and L19. Post-translationally, methylated by PrmB.

Its function is as follows. One of the primary rRNA binding proteins, it binds directly near the 3'-end of the 23S rRNA, where it nucleates assembly of the 50S subunit. The chain is Large ribosomal subunit protein uL3 from Nitrobacter winogradskyi (strain ATCC 25391 / DSM 10237 / CIP 104748 / NCIMB 11846 / Nb-255).